We begin with the raw amino-acid sequence, 201 residues long: 3-isopropylmalate dehydratase small subunit (201 aa).

It belongs to the LeuD family. LeuD type 1 subfamily. Heterodimer of LeuC and LeuD.

It catalyses the reaction (2R,3S)-3-isopropylmalate = (2S)-2-isopropylmalate. It functions in the pathway amino-acid biosynthesis; L-leucine biosynthesis; L-leucine from 3-methyl-2-oxobutanoate: step 2/4. In terms of biological role, catalyzes the isomerization between 2-isopropylmalate and 3-isopropylmalate, via the formation of 2-isopropylmaleate. This is 3-isopropylmalate dehydratase small subunit from Dinoroseobacter shibae (strain DSM 16493 / NCIMB 14021 / DFL 12).